The primary structure comprises 341 residues: Malate dehydrogenase 1, mitochondrial (341 aa).

Residues 1 to 22 (MFRSMLVRSSASAKQAVIRRSF) constitute a mitochondrion transit peptide. Residues 36–42 (GAAGGIG) and Asp-62 each bind NAD(+). The substrate site is built by Arg-109 and Arg-115. NAD(+) is bound by residues Asn-122 and 145–147 (ISN). Substrate contacts are provided by Asn-147 and Arg-181. His-205 acts as the Proton acceptor in catalysis. NAD(+) is bound at residue Met-256.

The protein belongs to the LDH/MDH superfamily. MDH type 1 family. In terms of assembly, homodimer. Post-translationally, forms intramolecular disulfide bonds. As to expression, expressed in rosette leaves.

It localises to the mitochondrion matrix. The catalysed reaction is (S)-malate + NAD(+) = oxaloacetate + NADH + H(+). With respect to regulation, negatively regulated by ATP. Not redox-regulated. The formation of intramolecular disulfide bonds does not alter enzymatic activity. Catalyzes a reversible NAD-dependent dehydrogenase reaction involved in central metabolism and redox homeostasis between organelle compartments. Required for carbon dioxide and energy partitioning in leaves. May limit photorespiration during the dark phase. Its activity is essential to shuttle reductants out from the mitochondria to support the photorespiratory flux. Can convert 2-oxoglutarate to (S)-2-hydroxyglutarate in vitro. This Arabidopsis thaliana (Mouse-ear cress) protein is Malate dehydrogenase 1, mitochondrial.